A 249-amino-acid polypeptide reads, in one-letter code: MKVTLVGNGRMGQQIAGIVNASDANVIHKVLDVSDAVTPEVFEGSDAIIDFTVRDAFLANYKAMIASGVPVVVGTTGWDELMPQIAEEVNAAGSSMLYSANFSLGVNVFFRTLREAARLIAPFEQFDIALSEQHHTGKADFPSGTAIKAAQEVLNNNPRKRTIVRELEDGKKLQSDELQVSSIRLGTVFGVHSAIIDSESDTIELTHTAKNRTGFASGAVRAAEWLAQQHAAKPGFYTMDDFLNDLFSA.

NAD(+) contacts are provided by residues Asp-32, 74–76, and 99–102; these read GTT and SANF. His-134 acts as the Proton donor/acceptor in catalysis. His-135 contacts (S)-2,3,4,5-tetrahydrodipicolinate. Catalysis depends on Lys-138, which acts as the Proton donor. A (S)-2,3,4,5-tetrahydrodipicolinate-binding site is contributed by 144–145; sequence GT.

This sequence belongs to the DapB family.

It is found in the cytoplasm. The catalysed reaction is (S)-2,3,4,5-tetrahydrodipicolinate + NAD(+) + H2O = (2S,4S)-4-hydroxy-2,3,4,5-tetrahydrodipicolinate + NADH + H(+). The enzyme catalyses (S)-2,3,4,5-tetrahydrodipicolinate + NADP(+) + H2O = (2S,4S)-4-hydroxy-2,3,4,5-tetrahydrodipicolinate + NADPH + H(+). The protein operates within amino-acid biosynthesis; L-lysine biosynthesis via DAP pathway; (S)-tetrahydrodipicolinate from L-aspartate: step 4/4. In terms of biological role, catalyzes the conversion of 4-hydroxy-tetrahydrodipicolinate (HTPA) to tetrahydrodipicolinate. The sequence is that of 4-hydroxy-tetrahydrodipicolinate reductase from Chlorobaculum parvum (strain DSM 263 / NCIMB 8327) (Chlorobium vibrioforme subsp. thiosulfatophilum).